The primary structure comprises 171 residues: Ribosome maturation factor RimM (171 aa).

A PRC barrel domain is found at 97-169 (DGEFYYHEII…RVDVSIMEGL (73 aa)).

Belongs to the RimM family. As to quaternary structure, binds ribosomal protein uS19.

The protein localises to the cytoplasm. Its function is as follows. An accessory protein needed during the final step in the assembly of 30S ribosomal subunit, possibly for assembly of the head region. Essential for efficient processing of 16S rRNA. May be needed both before and after RbfA during the maturation of 16S rRNA. It has affinity for free ribosomal 30S subunits but not for 70S ribosomes. In Lactococcus lactis subsp. lactis (strain IL1403) (Streptococcus lactis), this protein is Ribosome maturation factor RimM.